The primary structure comprises 1653 residues: Protein TOPAZ1 (1653 aa).

5 disordered regions span residues 1-88 (MPRA…PGID), 212-238 (GCMH…TDPS), 553-591 (KMKS…KKDR), 855-893 (PNVA…GSMK), and 919-942 (EVTH…SSDL). Basic and acidic residues-rich tracts occupy residues 58–69 (SGREEVESDKSA) and 221–236 (SKSK…DKTD). Residues 561–585 (RSASEVVSNTTEDTSLTNMTHNLTG) show a composition bias toward polar residues. 2 stretches are compositionally biased toward basic and acidic residues: residues 858-877 (AEEH…KKEP) and 920-942 (VTHE…SSDL).

It localises to the cytoplasm. It is found in the cytosol. Its function is as follows. Important for normal spermatogenesis and male fertility. Specifically required for progression to the post-meiotic stages of spermatocyte development. Seems to be necessary for normal expression levels of a number of testis-expressed gene transcripts, although its role in this process is unclear. This chain is Protein TOPAZ1 (TOPAZ1), found in Bos taurus (Bovine).